The sequence spans 296 residues: Cadherin-4 (296 aa).

3 Cadherin domains span residues 1 to 101, 102 to 216, and 217 to 296; these read NVPE…RPEF, INQV…PPEF, and TTST…MLTI. The Extracellular segment spans residues 1–296; that stretch reads NVPENSRGPF…ELNRAFMLTI (296 aa). N-linked (GlcNAc...) asparagine glycosylation is found at Asn107 and Asn236.

It localises to the cell membrane. In terms of biological role, cadherins are calcium-dependent cell adhesion proteins. They preferentially interact with themselves in a homophilic manner in connecting cells; cadherins may thus contribute to the sorting of heterogeneous cell types. May play an important role in retinal development. The sequence is that of Cadherin-4 (Cdh4) from Rattus norvegicus (Rat).